Reading from the N-terminus, the 419-residue chain is Gamma-glutamyl phosphate reductase (419 aa).

The protein belongs to the gamma-glutamyl phosphate reductase family.

It is found in the cytoplasm. It carries out the reaction L-glutamate 5-semialdehyde + phosphate + NADP(+) = L-glutamyl 5-phosphate + NADPH + H(+). It functions in the pathway amino-acid biosynthesis; L-proline biosynthesis; L-glutamate 5-semialdehyde from L-glutamate: step 2/2. Functionally, catalyzes the NADPH-dependent reduction of L-glutamate 5-phosphate into L-glutamate 5-semialdehyde and phosphate. The product spontaneously undergoes cyclization to form 1-pyrroline-5-carboxylate. In Tolumonas auensis (strain DSM 9187 / NBRC 110442 / TA 4), this protein is Gamma-glutamyl phosphate reductase.